Reading from the N-terminus, the 164-residue chain is NADH-quinone oxidoreductase subunit I (164 aa).

4Fe-4S ferredoxin-type domains lie at 54–84 (LRRYPNGEERCIACKLCEAICPAQAITIEAG) and 95–124 (VRYDIDMVKCIYCGFCQEACPVDAIVEGPN). Cys-64, Cys-67, Cys-70, Cys-74, Cys-104, Cys-107, Cys-110, and Cys-114 together coordinate [4Fe-4S] cluster.

Belongs to the complex I 23 kDa subunit family. NDH-1 is composed of 14 different subunits. Subunits NuoA, H, J, K, L, M, N constitute the membrane sector of the complex. [4Fe-4S] cluster serves as cofactor.

It is found in the cell inner membrane. It carries out the reaction a quinone + NADH + 5 H(+)(in) = a quinol + NAD(+) + 4 H(+)(out). Functionally, NDH-1 shuttles electrons from NADH, via FMN and iron-sulfur (Fe-S) centers, to quinones in the respiratory chain. The immediate electron acceptor for the enzyme in this species is believed to be ubiquinone. Couples the redox reaction to proton translocation (for every two electrons transferred, four hydrogen ions are translocated across the cytoplasmic membrane), and thus conserves the redox energy in a proton gradient. The chain is NADH-quinone oxidoreductase subunit I from Mesorhizobium japonicum (strain LMG 29417 / CECT 9101 / MAFF 303099) (Mesorhizobium loti (strain MAFF 303099)).